Reading from the N-terminus, the 715-residue chain is ATP-dependent zinc metalloprotease YME1L1 (715 aa).

Residues 31-54 (VSVNTSASPKQHRDTVAEHEAPSS) are disordered. Over residues 41-52 (QHRDTVAEHEAP) the composition is skewed to basic and acidic residues. A helical transmembrane segment spans residues 238–258 (ILFVLLLFGIYGLLKNPFLSV). V283, T325, G326, K327, T328, and L329 together coordinate ATP. H541 provides a ligand contact to Zn(2+). Residue E542 is part of the active site. 2 residues coordinate Zn(2+): H545 and D619.

In the N-terminal section; belongs to the AAA ATPase family. This sequence in the C-terminal section; belongs to the peptidase M41 family. As to quaternary structure, homohexamer; may also form heterohexamers. Exists in several complexes of 600-1100 kDa. Interacts with AFG1L. The cofactor is Zn(2+). Proteolytically processed by mitochondrial processing peptidase (MPP) to generate the mature form. Degraded in an OMA1-dependent manner in response to oxidative stress.

Its subcellular location is the mitochondrion inner membrane. It localises to the mitochondrion. It carries out the reaction ATP + H2O = ADP + phosphate + H(+). Functionally, ATP-dependent metalloprotease that catalyzes the degradation of folded and unfolded proteins with a suitable degron sequence in the mitochondrial intermembrane region. Plays an important role in regulating mitochondrial morphology and function by cleaving OPA1 at position S2, giving rise to a form of OPA1 that promotes maintenance of normal mitochondrial structure and mitochondrial protein metabolism. Ensures cell proliferation, maintains normal cristae morphology and complex I respiration activity, promotes antiapoptotic activity and protects mitochondria from the accumulation of oxidatively damaged membrane proteins. Required to control the accumulation of nonassembled respiratory chain subunits (NDUFB6, OX4 and ND1). Involved in the mitochondrial adaptation in response to various signals, such as stress or developmental cues, by mediating degradation of mitochondrial proteins to rewire the mitochondrial proteome. Catalyzes degradation of mitochondrial proteins, such as translocases, lipid transfer proteins and metabolic enzymes in response to nutrient starvation in order to limit mitochondrial biogenesis: mechanistically, YME1L is activated by decreased phosphatidylethanolamine levels caused by LPIN1 activity in response to mTORC1 inhibition. Acts as a regulator of adult neural stem cell self-renewal by promoting mitochondrial proteome rewiring, preserving neural stem and progenitor cells self-renewal. Required for normal, constitutive degradation of PRELID1. Catalyzes the degradation of OMA1 in response to membrane depolarization. Mediates degradation of TIMM17A downstream of the integrated stress response (ISR). Catalyzes degradation of MICU1 when MICU1 is not assembled via an interchain disulfide. This Rattus norvegicus (Rat) protein is ATP-dependent zinc metalloprotease YME1L1 (Yme1l1).